A 193-amino-acid chain; its full sequence is Interleukin-23 subunit alpha (193 aa).

An N-terminal signal peptide occupies residues 1–22 (MLGSRAVMLMLLLLLLPWTSQG).

Belongs to the IL-6 superfamily. In terms of assembly, heterodimer with IL12B; disulfide-linked. The heterodimer is known as interleukin IL-23. Interacts with IL23R; this interaction enables recruitment of IL12RB1.

Its subcellular location is the secreted. Associates with IL12B to form the pro-inflammatory cytokine IL-23 that plays different roles in innate and adaptive immunity. Released by antigen-presenting cells such as dendritic cells or macrophages, binds to a heterodimeric receptor complex composed of IL12RB1 and IL23R to activate JAK2 and TYK2 which then phosphorylate the receptor to form a docking site leading to the phosphorylation of STAT3 and STAT4. This process leads to activation of several pathways including p38 MAPK or NF-kappa-B and promotes the production of pro-inflammatory cytokines such as interleukin-17A/IL17A. In turn, participates in the early and effective intracellular bacterial clearance. Promotes the expansion and survival of T-helper 17 cells, a CD4-positive helper T-cell subset that produces IL-17, as well as other IL-17-producing cells. This is Interleukin-23 subunit alpha (IL23A) from Sus scrofa (Pig).